The sequence spans 230 residues: Ribosomal RNA small subunit methyltransferase G (230 aa).

S-adenosyl-L-methionine contacts are provided by residues G91, L96, V142 to E143, and R161.

This sequence belongs to the methyltransferase superfamily. RNA methyltransferase RsmG family.

The protein localises to the cytoplasm. The enzyme catalyses guanosine(527) in 16S rRNA + S-adenosyl-L-methionine = N(7)-methylguanosine(527) in 16S rRNA + S-adenosyl-L-homocysteine. Functionally, specifically methylates the N7 position of guanine in position 527 of 16S rRNA. The chain is Ribosomal RNA small subunit methyltransferase G from Burkholderia pseudomallei (strain K96243).